Here is a 146-residue protein sequence, read N- to C-terminus: Leghemoglobin Lb120-8 (146 aa).

Positions 2 to 146 constitute a Globin domain; the sequence is GFTEKQEALV…LASAIKKAMN (145 aa). Tyr-24 and Tyr-29 each carry nitrated tyrosine. Position 44 (Ser-44) interacts with heme b. Phosphoserine is present on Ser-44. His-61 serves as a coordination point for O2. Heme b-binding residues include Lys-64, His-93, and Lys-96. Tyr-134 carries the post-translational modification Nitrated tyrosine.

This sequence belongs to the plant globin family. As to quaternary structure, monomer. Post-translationally, nitrated in effective nodules and particularly in hypoxic conditions; this mechanism may play a protective role in the symbiosis by buffering toxic peroxynitrite NO(2)(-). Nitration level decrease during nodule senescence. In terms of processing, phosphorylation at Ser-44 disrupts the molecular environment of its porphyrin ring oxygen binding pocket, thus leading to a reduced oxygen consumption and to the delivery of oxygen O(2) to symbiosomes. In terms of tissue distribution, root nodules.

The protein resides in the cytoplasm. It localises to the cytosol. It is found in the nucleus. Leghemoglobin that reversibly binds oxygen O(2) through a pentacoordinated heme iron. In root nodules, facilitates the diffusion of oxygen to the bacteroids while preventing the bacterial nitrogenase from being inactivated by buffering dioxygen, nitric oxide and carbon monoxide, and promoting the formation of reactive oxygen species (ROS, e.g. H(2)O(2)). This role is essential for symbiotic nitrogen fixation (SNF). In Pisum sativum (Garden pea), this protein is Leghemoglobin Lb120-8.